Here is a 352-residue protein sequence, read N- to C-terminus: Glycoprotein integral membrane protein 1 (352 aa).

The first 25 residues, 1–25 (MASRCKIHLTVAYLLILCILASAQS), serve as a signal peptide directing secretion. The Extracellular segment spans residues 26-281 (KQMTTETVVL…KLRRFLSDSV (256 aa)). Residues Asn36, Asn44, Asn89, Asn109, Asn151, and Asn197 are each glycosylated (N-linked (GlcNAc...) asparagine). Residues 206–245 (NSETTQEEIAAPGKLPETPLRMDPETLYESREEEERRSDS) form a disordered region. Positions 225 to 244 (LRMDPETLYESREEEERRSD) are enriched in basic and acidic residues. A helical membrane pass occupies residues 282-302 (PLFFLVMWVVVVGVAGSAVVI). Over 303-352 (KILDLIFPSCEHRGFFHLNPETLMPDDEKVSLIDNMEGDMTEKSILLIEK) the chain is Cytoplasmic.

The protein resides in the membrane. The protein is Glycoprotein integral membrane protein 1 (ginm1) of Danio rerio (Zebrafish).